Here is a 671-residue protein sequence, read N- to C-terminus: DNA ligase (671 aa).

Residues 32 to 36, 81 to 82, and glutamate 113 contribute to the NAD(+) site; these read DAEYD and SL. Lysine 115 acts as the N6-AMP-lysine intermediate in catalysis. 4 residues coordinate NAD(+): arginine 136, glutamate 173, lysine 290, and lysine 314. Residues cysteine 408, cysteine 411, cysteine 426, and cysteine 432 each coordinate Zn(2+). The region spanning 593-671 is the BRCT domain; sequence EIDSPFAGKT…EAEMIRLLGA (79 aa).

It belongs to the NAD-dependent DNA ligase family. LigA subfamily. Mg(2+) is required as a cofactor. Mn(2+) serves as cofactor.

The enzyme catalyses NAD(+) + (deoxyribonucleotide)n-3'-hydroxyl + 5'-phospho-(deoxyribonucleotide)m = (deoxyribonucleotide)n+m + AMP + beta-nicotinamide D-nucleotide.. Functionally, DNA ligase that catalyzes the formation of phosphodiester linkages between 5'-phosphoryl and 3'-hydroxyl groups in double-stranded DNA using NAD as a coenzyme and as the energy source for the reaction. It is essential for DNA replication and repair of damaged DNA. The chain is DNA ligase from Salmonella choleraesuis (strain SC-B67).